Consider the following 101-residue polypeptide: MKPNFSKGLLPAVVIEEGTKEVLMLAYMNEEAYEKTLKTKRTWFYSRSRRSLWNKGETSGHVQHVQSLYLDCDQDSIVVVVKQVGPACHTGEKTCFHYKII.

D71 is a Mg(2+) binding site. C72 is a Zn(2+) binding site. D73 and D75 together coordinate Mg(2+). The Zn(2+) site is built by C88 and C95.

The protein belongs to the PRA-CH family. Homodimer. It depends on Mg(2+) as a cofactor. Zn(2+) serves as cofactor.

The protein localises to the cytoplasm. It carries out the reaction 1-(5-phospho-beta-D-ribosyl)-5'-AMP + H2O = 1-(5-phospho-beta-D-ribosyl)-5-[(5-phospho-beta-D-ribosylamino)methylideneamino]imidazole-4-carboxamide. The protein operates within amino-acid biosynthesis; L-histidine biosynthesis; L-histidine from 5-phospho-alpha-D-ribose 1-diphosphate: step 3/9. Functionally, catalyzes the hydrolysis of the adenine ring of phosphoribosyl-AMP. The sequence is that of Phosphoribosyl-AMP cyclohydrolase from Bacillus cereus (strain 03BB102).